We begin with the raw amino-acid sequence, 170 residues long: MADLIMGIDPGTLVCGYALIKVENRYHIHPHSFGKVKLSQKLALAHRYKQLFTEISTILQQESPKAVVLETQYVHKNPQSTIKLGMARGVLLLAASLQDVPVFEYAPNTAKKAAVGKGNASKKQVQLMVSKLLRVPDLLAEDNEDIADAFALAMCHAHLALYQDLKKTLV.

Residues Asp-9, Glu-70, and Asp-145 contribute to the active site. Residues Asp-9, Glu-70, and Asp-145 each coordinate Mg(2+).

This sequence belongs to the RuvC family. In terms of assembly, homodimer which binds Holliday junction (HJ) DNA. The HJ becomes 2-fold symmetrical on binding to RuvC with unstacked arms; it has a different conformation from HJ DNA in complex with RuvA. In the full resolvosome a probable DNA-RuvA(4)-RuvB(12)-RuvC(2) complex forms which resolves the HJ. Requires Mg(2+) as cofactor.

Its subcellular location is the cytoplasm. The enzyme catalyses Endonucleolytic cleavage at a junction such as a reciprocal single-stranded crossover between two homologous DNA duplexes (Holliday junction).. Its function is as follows. The RuvA-RuvB-RuvC complex processes Holliday junction (HJ) DNA during genetic recombination and DNA repair. Endonuclease that resolves HJ intermediates. Cleaves cruciform DNA by making single-stranded nicks across the HJ at symmetrical positions within the homologous arms, yielding a 5'-phosphate and a 3'-hydroxyl group; requires a central core of homology in the junction. The consensus cleavage sequence is 5'-(A/T)TT(C/G)-3'. Cleavage occurs on the 3'-side of the TT dinucleotide at the point of strand exchange. HJ branch migration catalyzed by RuvA-RuvB allows RuvC to scan DNA until it finds its consensus sequence, where it cleaves and resolves the cruciform DNA. The sequence is that of Crossover junction endodeoxyribonuclease RuvC from Chlamydia trachomatis serovar A (strain ATCC VR-571B / DSM 19440 / HAR-13).